The primary structure comprises 143 residues: Anti-sigma F factor (143 aa).

The protein belongs to the anti-sigma-factor family.

It carries out the reaction L-seryl-[protein] + ATP = O-phospho-L-seryl-[protein] + ADP + H(+). The enzyme catalyses L-threonyl-[protein] + ATP = O-phospho-L-threonyl-[protein] + ADP + H(+). Binds to sigma F and blocks its ability to form an RNA polymerase holoenzyme (E-sigma F). Phosphorylates SpoIIAA on a serine residue. This phosphorylation may enable SpoIIAA to act as an anti-anti-sigma factor that counteracts SpoIIAB and thus releases sigma F from inhibition. The polypeptide is Anti-sigma F factor (Caldanaerobacter subterraneus subsp. tengcongensis (strain DSM 15242 / JCM 11007 / NBRC 100824 / MB4) (Thermoanaerobacter tengcongensis)).